A 304-amino-acid chain; its full sequence is Oxygen-dependent coproporphyrinogen-III oxidase (304 aa).

Residue serine 93 participates in substrate binding. 2 residues coordinate a divalent metal cation: histidine 97 and histidine 107. Histidine 107 serves as the catalytic Proton donor. 109–111 serves as a coordination point for substrate; that stretch reads NVR. A divalent metal cation-binding residues include histidine 146 and histidine 176. Residues 241–276 form an important for dimerization region; that stretch reads YVEFNLVYDRGTLFGLQSGGRTESILMSLPPQVRWG. 259 to 261 contacts substrate; the sequence is GGR.

It belongs to the aerobic coproporphyrinogen-III oxidase family. As to quaternary structure, homodimer. It depends on a divalent metal cation as a cofactor.

The protein resides in the cytoplasm. The enzyme catalyses coproporphyrinogen III + O2 + 2 H(+) = protoporphyrinogen IX + 2 CO2 + 2 H2O. It functions in the pathway porphyrin-containing compound metabolism; protoporphyrin-IX biosynthesis; protoporphyrinogen-IX from coproporphyrinogen-III (O2 route): step 1/1. Its function is as follows. Involved in the heme biosynthesis. Catalyzes the aerobic oxidative decarboxylation of propionate groups of rings A and B of coproporphyrinogen-III to yield the vinyl groups in protoporphyrinogen-IX. The sequence is that of Oxygen-dependent coproporphyrinogen-III oxidase from Pseudomonas savastanoi pv. phaseolicola (strain 1448A / Race 6) (Pseudomonas syringae pv. phaseolicola (strain 1448A / Race 6)).